Here is a 199-residue protein sequence, read N- to C-terminus: Replication protein (199 aa).

It belongs to the Gram-positive plasmids replication protein type 2 family.

Functionally, is essential for plasmid replication. Nicks the positive strand at the plus origin of replication. The sequence is that of Replication protein (repF) from Staphylococcus aureus.